A 120-amino-acid polypeptide reads, in one-letter code: Natriuretic peptide (120 aa).

Residues 1-25 (MVGLSRLADGGLLLVLALLPLALDG) form the signal peptide. A propeptide spanning residues 26–70 (KPAPLEKAPMAPARIIPYLRPVGKESRAALDRMVPPEDGDSRRLE) is cleaved from the precursor. C81 and C97 are disulfide-bonded. The propeptide occupies 110–120 (ILPYLRPIRKE).

It belongs to the natriuretic peptide family. Expressed by the venom gland.

The protein localises to the secreted. In terms of biological role, natriuretic peptide that dose-dependently induces the rapid relaxation of rat aortic strips phenylephrine-precontracted. Acts by stimulating cGMP production in a dose-dependent manner (by probably activating NPR1 and/or NPR2). May also show potent hypotensive effects. The sequence is that of Natriuretic peptide from Micrurus altirostris (Uruguayan coral snake).